We begin with the raw amino-acid sequence, 169 residues long: Actin-related protein 2/3 complex subunit 4 (169 aa).

It belongs to the ARPC4 family. In terms of assembly, component of the Arp2/3 complex composed of arpB/Arp2, arpC/Arp3, arcA/p41-arc, arcB/p34-arc, arcC/p21-arc, arcD/p20-arc and arcE/p16-arc. Interacts with carmil (via the region between the LRR domain and COOH-terminal proline-rich domain); carmil is required for Arp2/3-dependent actin nucleation. Arp2/3 complex, MyoB, MyoC, and the alpha and beta subunits of capping protein all form a larger complex with carmil.

The protein resides in the cytoplasm. Its subcellular location is the cytoskeleton. It is found in the cytosol. The protein localises to the cell cortex. It localises to the cell projection. The protein resides in the pseudopodium. Functions as a component of the Arp2/3 complex which is involved in regulation of actin polymerization and together with an activating nucleation-promoting factor (NPF) mediates the formation of branched actin networks. Seems to contact the pointed end of the daughter actin filament. The Arp2/3 complex is involved in organizing the actin system in cell motility and chemotaxis, in phagocytosis and macropinocytosis, at late steps of endosome processing, and in mitosis. In concert with a group of other proteins, the Arp2/3 complex plays a general role in the rapid activation and adaptation of the actin system to its multiple functions. The polypeptide is Actin-related protein 2/3 complex subunit 4 (arcD) (Dictyostelium discoideum (Social amoeba)).